The sequence spans 264 residues: Thymidylate synthase (264 aa).

Arg21 lines the dUMP pocket. His51 serves as a coordination point for (6R)-5,10-methylene-5,6,7,8-tetrahydrofolate. Residue 126-127 coordinates dUMP; that stretch reads RR. Catalysis depends on Cys146, which acts as the Nucleophile. DUMP-binding positions include 166 to 169, Asn177, and 207 to 209; these read RSCD and HLY. A (6R)-5,10-methylene-5,6,7,8-tetrahydrofolate-binding site is contributed by Asp169. Ala263 provides a ligand contact to (6R)-5,10-methylene-5,6,7,8-tetrahydrofolate.

This sequence belongs to the thymidylate synthase family. Bacterial-type ThyA subfamily. In terms of assembly, homodimer.

The protein localises to the cytoplasm. The catalysed reaction is dUMP + (6R)-5,10-methylene-5,6,7,8-tetrahydrofolate = 7,8-dihydrofolate + dTMP. The protein operates within pyrimidine metabolism; dTTP biosynthesis. Functionally, catalyzes the reductive methylation of 2'-deoxyuridine-5'-monophosphate (dUMP) to 2'-deoxythymidine-5'-monophosphate (dTMP) while utilizing 5,10-methylenetetrahydrofolate (mTHF) as the methyl donor and reductant in the reaction, yielding dihydrofolate (DHF) as a by-product. This enzymatic reaction provides an intracellular de novo source of dTMP, an essential precursor for DNA biosynthesis. This is Thymidylate synthase from Shewanella putrefaciens (strain CN-32 / ATCC BAA-453).